Here is a 424-residue protein sequence, read N- to C-terminus: Probable carboxypeptidase AN5749 (424 aa).

The N-terminal stretch at 1 to 17 (MNLSILAALALVSFSTA) is a signal peptide. Asparagine 58 carries an N-linked (GlcNAc...) asparagine glycan. Aspartate 139 is a binding site for Zn(2+). Glutamate 171 functions as the Proton acceptor in the catalytic mechanism. Glutamate 172 is a Zn(2+) binding site. N-linked (GlcNAc...) asparagine glycans are attached at residues asparagine 184 and asparagine 323.

This sequence belongs to the peptidase M20A family. The cofactor is Zn(2+).

It is found in the secreted. The protein is Probable carboxypeptidase AN5749 of Emericella nidulans (strain FGSC A4 / ATCC 38163 / CBS 112.46 / NRRL 194 / M139) (Aspergillus nidulans).